We begin with the raw amino-acid sequence, 1744 residues long: Transcription initiation factor TFIID subunit 1 (1744 aa).

Disordered regions lie at residues 1–65, 248–275, 429–488, 1001–1024, 1071–1098, and 1186–1213; these read MNNT…EKNE, VSIRSGKPLNYRTPDDLPSTSSGPAPNS, PEDR…DNDP, QNQTLANTDPISTDDDSTDADSDN, TTNQVEKGEKKEEGEVTAEEKKSASQFG, and MKKNEEKAAHKVQKMTEKKVKPIKPPNP. Residues 43–52 show a composition bias toward polar residues; the sequence is ACSSASNGGS. Residues 55-64 are compositionally biased toward basic and acidic residues; that stretch reads VKMEPKVEKN. The segment covering 429–439 has biased composition (basic and acidic residues); the sequence is PEDRRHDEGPD. Residues 440–449 are compositionally biased toward basic residues; that stretch reads HHHHHHHHRK. Residues 477–488 show a composition bias toward polar residues; the sequence is ESTMAQFTDNDP. Over residues 1012-1024 the composition is skewed to acidic residues; it reads STDDDSTDADSDN. Coiled-coil stretches lie at residues 1019 to 1080, 1161 to 1204, and 1282 to 1314; these read DADS…KGEK, YAQM…TEKK, and NFAEIRKEQNREEKLKRKLAKMAEAAVRERQMA. Basic and acidic residues-rich tracts occupy residues 1076 to 1093 and 1186 to 1205; these read EKGEKKEEGEVTAEEKKS and MKKNEEKAAHKVQKMTEKKV. A compositionally biased stretch (gly residues) spans 1319–1344; sequence YGGGASSSGGAGGGGSGIGGSTGGGI. Positions 1319 to 1391 are disordered; that stretch reads YGGGASSSGG…SKRRSSMMPE (73 aa). The segment covering 1354–1363 has biased composition (polar residues); sequence SQISGTSSFL. The segment covering 1372–1381 has biased composition (low complexity); the sequence is GGNRNSSVSG. Residues 1379-1386 carry the Nuclear localization signal motif; sequence VSGSKRRS. 2 Bromo domains span residues 1404–1512 and 1537–1634; these read RARA…MIER and YLLG…VKDQ. The span at 1666–1694 shows a compositional bias: acidic residues; that stretch reads DHMDEMEDHPTEEEEEDDDDEIMDDDMDI. Disordered stretches follow at residues 1666 to 1702 and 1714 to 1744; these read DHMDEMEDHPTEEEEEDDDDEIMDDDMDIDATGYSYD and NDLAMSDSDEDERAEDVKRPANGDDNLLDSF.

It belongs to the TAF1 family. Component of the TFIID basal transcription factor complex, composed of TATA-box-binding protein tbp-1, and a number of TBP-associated factors (TAFs).

The protein localises to the nucleus. In terms of biological role, the TFIID basal transcription factor complex plays a major role in the initiation of RNA polymerase II (Pol II)-dependent transcription. TFIID recognizes and binds promoters via its subunit tbp-1, a TATA-box-binding protein, and promotes assembly of the pre-initiation complex (PIC). The TFIID complex consists of tbp-1 and TBP-associated factors (TAFs), including taf-1. May regulate RNA polymerase II activity and thereby may control transcription initiation by RNA polymerase II. Required for early embryonic development. Essential for embryonic transcription of several genes. This is Transcription initiation factor TFIID subunit 1 from Caenorhabditis elegans.